The sequence spans 75 residues: Small ribosomal subunit protein bS18 (75 aa).

The protein belongs to the bacterial ribosomal protein bS18 family. Part of the 30S ribosomal subunit. Forms a tight heterodimer with protein bS6.

In terms of biological role, binds as a heterodimer with protein bS6 to the central domain of the 16S rRNA, where it helps stabilize the platform of the 30S subunit. The sequence is that of Small ribosomal subunit protein bS18 from Sodalis glossinidius (strain morsitans).